The following is a 442-amino-acid chain: Glutamyl-tRNA(Gln) amidotransferase subunit D (442 aa).

Residues 63–84 (TQTDIGSSAGAGADTEADKTES) form a disordered region. Residues 102–429 (PTVSLISTGG…PDPTNAMRKS (328 aa)) form the Asparaginase/glutaminase domain. Residues threonine 112, threonine 188, aspartate 189, and lysine 265 contribute to the active site.

It belongs to the asparaginase 1 family. GatD subfamily. As to quaternary structure, heterodimer of GatD and GatE.

The enzyme catalyses L-glutamyl-tRNA(Gln) + L-glutamine + ATP + H2O = L-glutaminyl-tRNA(Gln) + L-glutamate + ADP + phosphate + H(+). Allows the formation of correctly charged Gln-tRNA(Gln) through the transamidation of misacylated Glu-tRNA(Gln) in organisms which lack glutaminyl-tRNA synthetase. The reaction takes place in the presence of glutamine and ATP through an activated gamma-phospho-Glu-tRNA(Gln). The GatDE system is specific for glutamate and does not act on aspartate. This chain is Glutamyl-tRNA(Gln) amidotransferase subunit D, found in Haloquadratum walsbyi (strain DSM 16790 / HBSQ001).